A 210-amino-acid chain; its full sequence is Endo-1,4-beta-xylanase A (210 aa).

Residues M1–G19 form the signal peptide. A GH11 domain is found at L20–W210. Residue E104 is the Nucleophile of the active site. E197 serves as the catalytic Proton donor.

Belongs to the glycosyl hydrolase 11 (cellulase G) family.

The enzyme catalyses Endohydrolysis of (1-&gt;4)-beta-D-xylosidic linkages in xylans.. The protein operates within glycan degradation; xylan degradation. The protein is Endo-1,4-beta-xylanase A (xynA) of Geobacillus stearothermophilus (Bacillus stearothermophilus).